The following is a 2474-amino-acid chain: Highly reducing polyketide synthase 40 (2474 aa).

In terms of domain architecture, Ketosynthase family 3 (KS3) spans 1–294 (MFKETEIQQR…GSNAHIIIDD (294 aa)). Residues Cys-42, His-177, and His-217 each act as for beta-ketoacyl synthase activity in the active site. Positions 459-798 (FVFTGQGAQW…GYESVLRRGT (340 aa)) constitute a Malonyl-CoA:ACP transacylase (MAT) domain. The N-terminal hotdog fold stretch occupies residues 864 to 998 (HELLGAPVPD…GLVVTEYEQP (135 aa)). Positions 864-1182 (HELLGAPVPD…ITTVARSEGA (319 aa)) constitute a PKS/mFAS DH domain. His-896 (proton acceptor; for dehydratase activity) is an active-site residue. Positions 1027–1182 (KVETSFRQLY…ITTVARSEGA (156 aa)) are C-terminal hotdog fold. Asp-1093 acts as the Proton donor; for dehydratase activity in catalysis. A methyltransferase (CMet) domain region spans residues 1232-1535 (VEMMCFLYIK…DLHIYDFPDH (304 aa)). Residues 1770–2063 (GLLDSLQFQD…SGSHMGKLVL (294 aa)) form the Enoyl reductase (ER) domain. A Ketoreductase (KR) domain is found at 2087–2263 (ASYLLSGGLG…PGVAVDLGMI (177 aa)). Positions 2385 to 2462 (DAAKIVSAAI…ELAELAAKRS (78 aa)) constitute a Carrier domain. An O-(pantetheine 4'-phosphoryl)serine modification is found at Ser-2422.

Pantetheine 4'-phosphate is required as a cofactor.

Its pathway is secondary metabolite biosynthesis. In terms of biological role, highly reducing polyketide synthase; part of the gene cluster that mediates the biosynthesis of the gamma-pyrones fusapyrone (FPY) and deoxyfusapyrone (dFPY). FPY is an undecaketide and thus likely synthesized by the polyketide synthase FPY1 from acetyl-CoA functioning as starter unit and the addition of 10 malonyl-CoA extender units by successive Claisen-condensations. Next to this, FPY shares some rare features: C-glycosylated 4-deoxyglucose at C-3, a gem-dimethyl group at C-13, and an alpha-beta to beta-gamma double bond shift at C-20. During FPY biosynthesis mono-C-methyl groups are transferred to the tetra-, penta-, hexa- and heptaketide, while two C-methyl groups are transferred to the nonaketide, suggesting that the CMet domain is programmed to selectively catalyze two successive C-alpha-methylation reactions of the nonaketide, while other alpha-carbons are non- or mono-methylated only. While the origin of the 4'-deoxyglucose moiety remains opaque, its transfer to C-3 is most likely mediated by the C-glycosyltransferase FPY2. Next to this, the hydroxyl group present at C-33 and discriminating between FPY and dFPY, is likely to be installed by the cytochrome P450 monooxygenase FPY7. No putative function can be predicted for the remaining genes FPY3-FPY6. The protein is Highly reducing polyketide synthase 40 of Fusarium mangiferae (Mango malformation disease fungus).